The following is an 838-amino-acid chain: Protein P (838 aa).

The terminal protein domain (TP) stretch occupies residues 1–179 (MPLSYQHFRK…FCGSPYSWEQ (179 aa)). The spacer stretch occupies residues 180 to 341 (ELQHSQRHGD…YCLSHLVNLR (162 aa)). Residues 219 to 245 (GLQPHQGPLASSQPGRSGSIRARAHPS) are disordered. The polymerase/reverse transcriptase domain (RT) stretch occupies residues 342–685 (EDWGPCDDHG…YMNLYPVARQ (344 aa)). Residues 352–595 (EHHIRIPRTP…YSLNFMGYII (244 aa)) form the Reverse transcriptase domain. Mg(2+)-binding residues include aspartate 424, aspartate 546, and aspartate 547.

Belongs to the hepadnaviridae P protein family.

The enzyme catalyses DNA(n) + a 2'-deoxyribonucleoside 5'-triphosphate = DNA(n+1) + diphosphate. The catalysed reaction is Endonucleolytic cleavage to 5'-phosphomonoester.. Activated by host HSP70 and HSP40 in vitro to be able to bind the epsilon loop of the pgRNA. Because deletion of the RNase H region renders the protein partly chaperone-independent, the chaperones may be needed indirectly to relieve occlusion of the RNA-binding site by this domain. Inhibited by several reverse-transcriptase inhibitors: Lamivudine, Adefovir and Entecavir. Multifunctional enzyme that converts the viral RNA genome into dsDNA in viral cytoplasmic capsids. This enzyme displays a DNA polymerase activity that can copy either DNA or RNA templates, and a ribonuclease H (RNase H) activity that cleaves the RNA strand of RNA-DNA heteroduplexes in a partially processive 3'- to 5'-endonucleasic mode. Neo-synthesized pregenomic RNA (pgRNA) are encapsidated together with the P protein, and reverse-transcribed inside the nucleocapsid. Initiation of reverse-transcription occurs first by binding the epsilon loop on the pgRNA genome, and is initiated by protein priming, thereby the 5'-end of (-)DNA is covalently linked to P protein. Partial (+)DNA is synthesized from the (-)DNA template and generates the relaxed circular DNA (RC-DNA) genome. After budding and infection, the RC-DNA migrates in the nucleus, and is converted into a plasmid-like covalently closed circular DNA (cccDNA). The activity of P protein does not seem to be necessary for cccDNA generation, and is presumably released from (+)DNA by host nuclear DNA repair machinery. In Hepatitis B virus genotype A2 subtype adw (isolate Japan/Nishioka/1983) (HBV-A), this protein is Protein P.